Consider the following 412-residue polypeptide: MGLHLRPYRVGLLPDGLLFLLLLLMLLADPALPAGRHPPVVLVPGDLGNQLEAKLDKPTVVHYLCSKKTESYFTIWLNLELLLPVIIDCWIDNIRLVYNKTSRATQFPDGVDVRVPGFGKTFSLEFLDPSKSSVGSYFHTMVESLVGWGYTRGEDVRGAPYDWRRAPNENGPYFLALREMIEEMYQLYGGPVVLVAHSMGNMYTLYFLQRQPQAWKDKYIRAFVSLGAPWGGVAKTLRVLASGDNNRIPVIGPLKIREQQRSAVSTSWLLPYNYTWSPEKVFVQTPTINYTLRDYRKFFQDIGFEDGWLMRQDTEGLVEATMPPGVQLHCLYGTGVPTPDSFYYESFPDRDPKICFGDGDGTVNLKSALQCQAWQSRQEHQVLLQELPGSEHIEMLANATTLAYLKRVLLGP.

The N-terminal stretch at 1 to 33 (MGLHLRPYRVGLLPDGLLFLLLLLMLLADPALP) is a signal peptide. Asp46 contacts substrate. A disulfide bridge links Cys65 with Cys89. Asn99 carries an N-linked (GlcNAc...) asparagine glycan. Ser198 functions as the Acyl-ester intermediate in the catalytic mechanism. Ser198 is a binding site for Zn(2+). A substrate-binding site is contributed by Met199. Asn273 and Asn289 each carry an N-linked (GlcNAc...) asparagine glycan. 2 residues coordinate Zn(2+): Asp340 and Cys355. Active-site charge relay system residues include Asp360 and His392. Position 392 (His392) interacts with Zn(2+). An N-linked (GlcNAc...) asparagine glycan is attached at Asn398.

The protein belongs to the AB hydrolase superfamily. Lipase family. Post-translationally, N-glycosylated. N-glycosylation is important for maturation of the enzyme and normal subcellular location. In terms of tissue distribution, detected in blood plasma (at protein level). Ubiquitous. Highly expressed in heart, placenta, skeletal muscle, kidney and pancreas. Detected at lower levels in spleen, thymus, prostate, testis, ovary, small intestine, colon and peripheral blood leukocytes.

It is found in the lysosome. Its subcellular location is the secreted. The protein resides in the membrane. The enzyme catalyses a 1,2-diacyl-sn-glycero-3-phosphocholine + H2O = a 2-acyl-sn-glycero-3-phosphocholine + a fatty acid + H(+). It catalyses the reaction 1-hexadecanoyl-2-(9Z-octadecenoyl)-sn-glycero-3-phosphocholine + H2O = 2-(9Z-octadecenoyl)-sn-glycero-3-phosphocholine + hexadecanoate + H(+). The catalysed reaction is 1-hexadecanoyl-2-glutaroyl-sn-glycero-3-phosphocholine + H2O = 2-glutaroyl-sn-glycero-3-phosphocholine + hexadecanoate + H(+). It carries out the reaction 1-hexadecanoyl-2-nonadioyl-sn-glycero-3-phosphocholine + H2O = 2-nonadioyl-sn-glycero-3-phosphocholine + hexadecanoate + H(+). The enzyme catalyses 1-hexadecanoyl-2-(5-oxopentanoyl)-sn-glycero-3-phosphocholine + H2O = 2-(5-oxopentanoyl)-sn-glycero-3-phosphocholine + hexadecanoate + H(+). It catalyses the reaction 1-hexadecanoyl-2-(9-oxononanoyl)-sn-glycero-3-phosphocholine + H2O = 2-(9-oxononanoyl)-sn-glycero-3-phosphocholine + hexadecanoate + H(+). The catalysed reaction is 1,2-dihexadecanoyl-sn-glycero-3-phosphocholine + H2O = 2-hexadecanoyl-sn-glycero-3-phosphocholine + hexadecanoate + H(+). It carries out the reaction a 1,2-diacyl-sn-glycero-3-phosphocholine + H2O = a 1-acyl-sn-glycero-3-phosphocholine + a fatty acid + H(+). The enzyme catalyses 1,2-di-(9Z-octadecenoyl)-sn-glycero-3-phosphocholine + H2O = 1-(9Z-octadecenoyl)-sn-glycero-3-phosphocholine + (9Z)-octadecenoate + H(+). It catalyses the reaction 1-hexadecanoyl-2-(9Z-octadecenoyl)-sn-glycero-3-phosphocholine + H2O = 1-hexadecanoyl-sn-glycero-3-phosphocholine + (9Z)-octadecenoate + H(+). The catalysed reaction is 1,2-dihexadecanoyl-sn-glycero-3-phosphocholine + H2O = 1-hexadecanoyl-sn-glycero-3-phosphocholine + hexadecanoate + H(+). It carries out the reaction a 1-acyl-sn-glycero-3-phosphocholine + H2O = sn-glycerol 3-phosphocholine + a fatty acid + H(+). The enzyme catalyses 1-hexadecanoyl-sn-glycero-3-phosphocholine + H2O = sn-glycerol 3-phosphocholine + hexadecanoate + H(+). It catalyses the reaction N-(acetyl)-sphing-4-enine + a 1,2-diacyl-sn-glycero-3-phosphoethanolamine = 1-O-acyl-N-(acetyl)-sphing-4-enine + a 2-acyl-sn-glycero-3-phosphoethanolamine. The catalysed reaction is 1-hexadecanoyl-2-(9Z-octadecenoyl)-sn-glycero-3-phosphoethanolamine + N-(acetyl)-sphing-4-enine = 2-(9Z-octadecenoyl)-sn-glycero-3-phosphoethanolamine + 1-hexadecanoyl-N-(acetyl)-sphing-4-enine. It carries out the reaction 1-hexadecanoyl-2-(9Z,12Z-octadecadienoyl)-sn-glycero-3-phosphoethanolamine + N-(acetyl)-sphing-4-enine = 2-(9Z,12Z)-octadecadienoyl-sn-glycero-3-phosphoethanolamine + 1-hexadecanoyl-N-(acetyl)-sphing-4-enine. The enzyme catalyses 1-hexadecanoyl-2-(5Z,8Z,11Z,14Z-eicosatetraenoyl)-sn-glycero-3-phosphoethanolamine + N-(acetyl)-sphing-4-enine = 2-(5Z,8Z,11Z,14Z)-eicosatetraenoyl-sn-glycero-3-phosphoethanolamine + 1-hexadecanoyl-N-(acetyl)-sphing-4-enine. It catalyses the reaction N-(acetyl)-sphing-4-enine + a 1,2-diacyl-sn-glycero-3-phosphoethanolamine = 1-O-acyl-N-(acetyl)-sphing-4-enine + a 1-acyl-sn-glycero-3-phosphoethanolamine. The catalysed reaction is 1-hexadecanoyl-2-(9Z-octadecenoyl)-sn-glycero-3-phosphoethanolamine + N-(acetyl)-sphing-4-enine = 1-(9Z-octadecenoyl)-N-(acetyl)-sphing-4-enine + 1-hexadecanoyl-sn-glycero-3-phosphoethanolamine. It carries out the reaction 1-hexadecanoyl-2-(9Z,12Z-octadecadienoyl)-sn-glycero-3-phosphoethanolamine + N-(acetyl)-sphing-4-enine = 1-(9Z,12Z-octadecadienoyl)-N-acetylsphing-4-enine + 1-hexadecanoyl-sn-glycero-3-phosphoethanolamine. The enzyme catalyses 1-hexadecanoyl-2-(5Z,8Z,11Z,14Z-eicosatetraenoyl)-sn-glycero-3-phosphoethanolamine + N-(acetyl)-sphing-4-enine = 1-(5Z,8Z,11Z,14Z)-eicosatetraenoyl-N-(acetyl)-sphing-4-enine + 1-hexadecanoyl-sn-glycero-3-phosphoethanolamine. It catalyses the reaction N-(acetyl)-sphing-4-enine + a 1,2-diacyl-sn-glycero-3-phosphocholine = 1-O-acyl-N-(acetyl)-sphing-4-enine + a 1-acyl-sn-glycero-3-phosphocholine. The catalysed reaction is 1-hexadecanoyl-2-(9Z-octadecenoyl)-sn-glycero-3-phosphocholine + N-(acetyl)-sphing-4-enine = 1-(9Z-octadecenoyl)-N-(acetyl)-sphing-4-enine + 1-hexadecanoyl-sn-glycero-3-phosphocholine. It carries out the reaction 1-hexadecanoyl-2-(9Z,12Z-octadecadienoyl)-sn-glycero-3-phosphocholine + N-(acetyl)-sphing-4-enine = 1-(9Z,12Z-octadecadienoyl)-N-acetylsphing-4-enine + 1-hexadecanoyl-sn-glycero-3-phosphocholine. The enzyme catalyses 1-hexadecanoyl-2-(5Z,8Z,11Z,14Z-eicosatetraenoyl)-sn-glycero-3-phosphocholine + N-(acetyl)-sphing-4-enine = 1-(5Z,8Z,11Z,14Z)-eicosatetraenoyl-N-(acetyl)-sphing-4-enine + 1-hexadecanoyl-sn-glycero-3-phosphocholine. It catalyses the reaction 1-hexadecanoyl-2-(4Z,7Z,10Z,13Z,16Z,19Z-docosahexaenoyl)-sn-glycero-3-phosphocholine + N-(acetyl)-sphing-4-enine = 1-(4Z,7Z,10Z,13Z,16Z,19Z-docosahexaenoyl)-N-(acetyl)-sphing-4-enine + 1-hexadecanoyl-sn-glycero-3-phosphocholine. The catalysed reaction is 1-octadecanoyl-2-(9Z-octadecenoyl)-sn-glycero-3-phosphocholine + N-(acetyl)-sphing-4-enine = 1-(9Z-octadecenoyl)-N-(acetyl)-sphing-4-enine + 1-octadecanoyl-sn-glycero-3-phosphocholine. It carries out the reaction 1-octadecanoyl-2-(9Z,12Z)-octadecadienoyl-sn-glycero-3-phosphocholine + N-(acetyl)-sphing-4-enine = 1-(9Z,12Z-octadecadienoyl)-N-acetylsphing-4-enine + 1-octadecanoyl-sn-glycero-3-phosphocholine. The enzyme catalyses 1-octadecanoyl-2-(5Z,8Z,11Z,14Z-eicosatetraenoyl)-sn-glycero-3-phosphocholine + N-(acetyl)-sphing-4-enine = 1-(5Z,8Z,11Z,14Z)-eicosatetraenoyl-N-(acetyl)-sphing-4-enine + 1-octadecanoyl-sn-glycero-3-phosphocholine. It catalyses the reaction 1-(9Z-octadecenoyl)-2-hexadecanoyl-sn-glycero-3-phosphocholine + N-(acetyl)-sphing-4-enine = 1-hexadecanoyl-N-(acetyl)-sphing-4-enine + 1-(9Z-octadecenoyl)-sn-glycero-3-phosphocholine. The catalysed reaction is 1-(9Z)-octadecenoyl-2-octadecanoyl-sn-glycero-3-phosphocholine + N-(acetyl)-sphing-4-enine = 1-octadecanoyl-N-(acetyl)-sphing-4-enine + 1-(9Z-octadecenoyl)-sn-glycero-3-phosphocholine. It carries out the reaction 1,2-di-(9Z-octadecenoyl)-sn-glycero-3-phosphocholine + N-(acetyl)-sphing-4-enine = 1-(9Z-octadecenoyl)-N-(acetyl)-sphing-4-enine + 1-(9Z-octadecenoyl)-sn-glycero-3-phosphocholine. The enzyme catalyses N-(acetyl)-sphing-4-enine + a 1,2-diacyl-sn-glycero-3-phosphocholine = 1-O-acyl-N-(acetyl)-sphing-4-enine + a 2-acyl-sn-glycero-3-phosphocholine. It catalyses the reaction 1-hexadecanoyl-2-(9Z-octadecenoyl)-sn-glycero-3-phosphocholine + N-(acetyl)-sphing-4-enine = 1-hexadecanoyl-N-(acetyl)-sphing-4-enine + 2-(9Z-octadecenoyl)-sn-glycero-3-phosphocholine. The catalysed reaction is 1-hexadecanoyl-2-(9Z,12Z-octadecadienoyl)-sn-glycero-3-phosphocholine + N-(acetyl)-sphing-4-enine = 2-(9Z,12Z-octadecadienoyl)-sn-glycero-3-phosphocholine + 1-hexadecanoyl-N-(acetyl)-sphing-4-enine. It carries out the reaction 1-hexadecanoyl-2-(5Z,8Z,11Z,14Z-eicosatetraenoyl)-sn-glycero-3-phosphocholine + N-(acetyl)-sphing-4-enine = 1-hexadecanoyl-N-(acetyl)-sphing-4-enine + 2-(5Z,8Z,11Z,14Z)-eicosatetraenoyl-sn-glycero-3-phosphocholine. The enzyme catalyses 1-hexadecanoyl-2-(4Z,7Z,10Z,13Z,16Z,19Z-docosahexaenoyl)-sn-glycero-3-phosphocholine + N-(acetyl)-sphing-4-enine = 2-(4Z,7Z,10Z,13Z,16Z,19Z-docosahexaenoyl)-sn-glycero-3-phosphocholine + 1-hexadecanoyl-N-(acetyl)-sphing-4-enine. It catalyses the reaction 1-hexadecanoyl-2-nonadioyl-sn-glycero-3-phosphocholine + N-(acetyl)-sphing-4-enine = 2-nonadioyl-sn-glycero-3-phosphocholine + 1-hexadecanoyl-N-(acetyl)-sphing-4-enine. The catalysed reaction is 1-octadecanoyl-2-(9Z-octadecenoyl)-sn-glycero-3-phosphocholine + N-(acetyl)-sphing-4-enine = 1-octadecanoyl-N-(acetyl)-sphing-4-enine + 2-(9Z-octadecenoyl)-sn-glycero-3-phosphocholine. It carries out the reaction 1-octadecanoyl-2-(5Z,8Z,11Z,14Z-eicosatetraenoyl)-sn-glycero-3-phosphocholine + N-(acetyl)-sphing-4-enine = 1-octadecanoyl-N-(acetyl)-sphing-4-enine + 2-(5Z,8Z,11Z,14Z)-eicosatetraenoyl-sn-glycero-3-phosphocholine. The enzyme catalyses 1-(9Z-octadecenoyl)-2-hexadecanoyl-sn-glycero-3-phosphocholine + N-(acetyl)-sphing-4-enine = 1-(9Z-octadecenoyl)-N-(acetyl)-sphing-4-enine + 2-hexadecanoyl-sn-glycero-3-phosphocholine. It catalyses the reaction 1-(9Z)-octadecenoyl-2-octadecanoyl-sn-glycero-3-phosphocholine + N-(acetyl)-sphing-4-enine = 2-octadecanoyl-sn-glycero-3-phosphocholine + 1-(9Z-octadecenoyl)-N-(acetyl)-sphing-4-enine. The catalysed reaction is a 1,2-diacyl-sn-glycero-3-phospho-L-serine + N-(acetyl)-sphing-4-enine = a 2-acyl-sn-glycero-3-phospho-L-serine + 1-O-acyl-N-(acetyl)-sphing-4-enine. It carries out the reaction 1-octadecanoyl-2-(9Z-octadecenoyl)-sn-glycero-3-phospho-L-serine + N-(acetyl)-sphing-4-enine = 2-(9Z-octadecenoyl)-sn-glycero-3-phospho-L-serine + 1-octadecanoyl-N-(acetyl)-sphing-4-enine. The enzyme catalyses a 1,2-diacyl-sn-glycero-3-phospho-L-serine + N-(acetyl)-sphing-4-enine = 1-O-acyl-N-(acetyl)-sphing-4-enine + a 1-acyl-sn-glycero-3-phospho-L-serine. It catalyses the reaction 1-octadecanoyl-2-(9Z-octadecenoyl)-sn-glycero-3-phospho-L-serine + N-(acetyl)-sphing-4-enine = 1-octadecanoyl-sn-glycero-3-phosphoserine + 1-(9Z-octadecenoyl)-N-(acetyl)-sphing-4-enine. The catalysed reaction is a 1,2-diacyl-sn-glycero-3-phospho-(1'-sn-glycerol) + N-(acetyl)-sphing-4-enine = 2-acyl-sn-glycero-3-phospho-(1'-sn-glycerol) + 1-O-acyl-N-(acetyl)-sphing-4-enine. It carries out the reaction 1-octadecanoyl-2-(9Z-octadecenoyl)-sn-glycero-3-phospho-(1'-sn-glycerol) + N-(acetyl)-sphing-4-enine = 2-(9Z-octadecenoyl)-sn-glycero-3-phospho-(1'-sn-glycerol) + 1-octadecanoyl-N-(acetyl)-sphing-4-enine. The enzyme catalyses a 1,2-diacyl-sn-glycero-3-phospho-(1'-sn-glycerol) + N-(acetyl)-sphing-4-enine = 1-O-acyl-N-(acetyl)-sphing-4-enine + 1-acyl-sn-glycero-3-phospho-(1'-sn-glycerol). It catalyses the reaction 1-octadecanoyl-2-(9Z-octadecenoyl)-sn-glycero-3-phospho-(1'-sn-glycerol) + N-(acetyl)-sphing-4-enine = 1-octadecanoyl-sn-glycero-3-phospho-(1'-sn-glycerol) + 1-(9Z-octadecenoyl)-N-(acetyl)-sphing-4-enine. The catalysed reaction is an N-acylethanolamine + a 1,2-diacyl-sn-glycero-3-phosphocholine = 2-(acylamino)ethyl fatty acid + a 2-acyl-sn-glycero-3-phosphocholine. It carries out the reaction an N-acylethanolamine + a 1,2-diacyl-sn-glycero-3-phosphocholine = 2-(acylamino)ethyl fatty acid + a 1-acyl-sn-glycero-3-phosphocholine. The enzyme catalyses N-(5Z,8Z,11Z,14Z-eicosatetraenoyl)-ethanolamine + 1,2-di-(9Z-octadecenoyl)-sn-glycero-3-phosphocholine = 2-[(5Z,8Z,11Z,14Z)-eicosatetraenoylamino]ethyl (9Z)-octadecenoate + (9Z-octadecenoyl)-sn-glycero-3-phosphocholine. It catalyses the reaction N-(9Z-octadecenoyl) ethanolamine + 1,2-di-(9Z-octadecenoyl)-sn-glycero-3-phosphocholine = 2-[(9Z)-octadecenoylamino]ethyl (9Z)-octadecenoate + (9Z-octadecenoyl)-sn-glycero-3-phosphocholine. The catalysed reaction is a 3-acyl-sn-glycerol + a 1,2-diacyl-sn-glycero-3-phosphocholine = a 1,3-diacylglycerol + a 1-acyl-sn-glycero-3-phosphocholine. It carries out the reaction a 3-acyl-sn-glycerol + a 1,2-diacyl-sn-glycero-3-phosphocholine = a 1,3-diacylglycerol + a 2-acyl-sn-glycero-3-phosphocholine. The enzyme catalyses 3-(9Z-octadecenoyl)-sn-glycerol + 1,2-di-(9Z-octadecenoyl)-sn-glycero-3-phosphocholine = 1,3-di-(9Z-octadecenoyl)-glycerol + (9Z-octadecenoyl)-sn-glycero-3-phosphocholine. It catalyses the reaction 3-hexadecanoyl-sn-glycerol + 1,2-di-(9Z-octadecenoyl)-sn-glycero-3-phosphocholine = 1-(9Z)-octadecenoyl-3-hexadecanoyl-sn-glycerol + (9Z-octadecenoyl)-sn-glycero-3-phosphocholine. The catalysed reaction is a 1-acyl-sn-glycerol + a 1,2-diacyl-sn-glycero-3-phosphocholine = a 1,3-diacylglycerol + a 2-acyl-sn-glycero-3-phosphocholine. It carries out the reaction a 1-acyl-sn-glycerol + a 1,2-diacyl-sn-glycero-3-phosphocholine = a 1,3-diacylglycerol + a 1-acyl-sn-glycero-3-phosphocholine. The enzyme catalyses 1-(9Z-octadecenoyl)-sn-glycerol + 1,2-di-(9Z-octadecenoyl)-sn-glycero-3-phosphocholine = 1,3-di-(9Z-octadecenoyl)-glycerol + (9Z-octadecenoyl)-sn-glycero-3-phosphocholine. It catalyses the reaction 1-hexadecanoyl-sn-glycerol + 1,2-di-(9Z-octadecenoyl)-sn-glycero-3-phosphocholine = 1-hexadecanoyl-3-(9Z)-octadecenoyl-sn-glycerol + (9Z-octadecenoyl)-sn-glycero-3-phosphocholine. The catalysed reaction is a 2-acylglycerol + a 1,2-diacyl-sn-glycero-3-phosphocholine = a 1,2-diacylglycerol + a 2-acyl-sn-glycero-3-phosphocholine. It carries out the reaction a 2-acylglycerol + a 1,2-diacyl-sn-glycero-3-phosphocholine = a 1,2-diacylglycerol + a 1-acyl-sn-glycero-3-phosphocholine. The enzyme catalyses 2-hexadecanoylglycerol + 1,2-di-(9Z-octadecenoyl)-sn-glycero-3-phosphocholine = 1-(9Z)-octadecenoyl-2-hexadecanoylglycerol + (9Z-octadecenoyl)-sn-glycero-3-phosphocholine. It catalyses the reaction 1-O-alkylglycerol + a 1,2-diacyl-sn-glycero-3-phosphocholine = 1-O-alkyl-3-acylglycerol + a 1-acyl-sn-glycero-3-phosphocholine. The catalysed reaction is 1-O-alkylglycerol + a 1,2-diacyl-sn-glycero-3-phosphocholine = 1-O-alkyl-3-acylglycerol + a 2-acyl-sn-glycero-3-phosphocholine. It carries out the reaction 1-O-hexadecylglycerol + 1,2-di-(9Z-octadecenoyl)-sn-glycero-3-phosphocholine = 1-O-hexadecyl-3-(9Z)-octadecenoylglycerol + (9Z-octadecenoyl)-sn-glycero-3-phosphocholine. The enzyme catalyses 1-O-alkyl-2-acyl-sn-glycerol + a 1,2-diacyl-sn-glycero-3-phosphocholine = 1-O-alkyl-2,3-diacyl-sn-glycerol + a 2-acyl-sn-glycero-3-phosphocholine. It catalyses the reaction 1-O-alkyl-2-acyl-sn-glycerol + a 1,2-diacyl-sn-glycero-3-phosphocholine = 1-O-alkyl-2,3-diacyl-sn-glycerol + a 1-acyl-sn-glycero-3-phosphocholine. The catalysed reaction is 1-O-hexadecyl-2-acetyl-sn-glycerol + 1,2-di-(9Z-octadecenoyl)-sn-glycero-3-phosphocholine = 1-O-hexadecyl-2-acetyl-3-(9Z)-octadecenoyl-sn-glycerol + (9Z-octadecenoyl)-sn-glycero-3-phosphocholine. It carries out the reaction 1-O-hexadecyl-2-O-methyl-sn-glycerol + 1,2-di-(9Z-octadecenoyl)-sn-glycero-3-phosphocholine = 1-O-hexadecyl-2-O-methyl-3-(9Z)-octadecenoyl-sn-glycerol + (9Z-octadecenoyl)-sn-glycero-3-phosphocholine. The enzyme catalyses a 1,2-diacyl-sn-glycero-3-phosphoethanolamine + H2O = a 1-acyl-sn-glycero-3-phosphoethanolamine + a fatty acid + H(+). It catalyses the reaction 1-acyl-2-(5Z,8Z,11Z,14Z)-eicosatetraenoyl-sn-glycero-3-phosphoethanolamine + H2O = a 1-acyl-sn-glycero-3-phosphoethanolamine + (5Z,8Z,11Z,14Z)-eicosatetraenoate + H(+). The catalysed reaction is a 1,2-diacyl-sn-glycero-3-phospho-(1'-sn-glycerol) + H2O = 1-acyl-sn-glycero-3-phospho-(1'-sn-glycerol) + a fatty acid + H(+). It carries out the reaction 1-hexadecanoyl-2-(9Z-octadecenoyl)-sn-glycero-3-phospho-(1'-sn-glycerol) + H2O = 1-hexadecanoyl-sn-glycero-3-phospho-(1'-sn-glycerol) + (9Z)-octadecenoate + H(+). The enzyme catalyses a 1,2-diacyl-sn-glycero-3-phospho-(1'-sn-glycerol) + H2O = 2-acyl-sn-glycero-3-phospho-(1'-sn-glycerol) + a fatty acid + H(+). It catalyses the reaction 1-hexadecanoyl-2-(9Z-octadecenoyl)-sn-glycero-3-phospho-(1'-sn-glycerol) + H2O = 2-(9Z-octadecenoyl)-sn-glycero-3-phospho-(1'-sn-glycerol) + hexadecanoate + H(+). Inhibited by zinc ions at neutral pH. Zinc ions in plasma may keep the enzyme from hydrolyzing inappropriate substrates. Its function is as follows. Has dual calcium-independent phospholipase and O-acyltransferase activities with a potential role in glycerophospholipid homeostasis and remodeling of acyl groups of lipophilic alcohols present in acidic cellular compartments. Catalyzes hydrolysis of the ester bond of the fatty acyl group attached at sn-1 or sn-2 position of phospholipids (phospholipase A1 or A2 activity) and transfer it to the hydroxyl group at the first carbon of lipophilic alcohols (O-acyltransferase activity). Among preferred fatty acyl donors are phosphatidylcholines, phosphatidylethanolamines, phosphatidylglycerols and phosphatidylserines. Favors sn-2 over sn-1 deacylation of unsaturated fatty acyl groups of phosphatidylcholines, phosphatidylethanolamines, and phosphatidylglycerols. Among preferred fatty acyl acceptors are natural lipophilic alcohols including short-chain ceramide N-acetyl-sphingosine (C2 ceramide), alkylacylglycerols, monoacylglycerols, and acylethanolamides such as anandamide and oleoylethanolamide. Selectively hydrolyzes the sn-1 fatty acyl group of truncated oxidized phospholipids and may play a role in detoxification of reactive oxidized phospholipids during oxidative stress. Required for normal phospholipid degradation in alveolar macrophages with potential implications in the clearance of pulmonary surfactant, which is mainly composed of dipalmitoylphosphatidylcholine (1,2-dihexadecanoyl-sn-glycero-3-phosphocholine). Involved in the first step of bis(monoacylglycero)phosphate (BMP) de novo synthesis from phosphatidylglycerol (1,2-diacyl-sn-glycero-3-phospho-(1'-sn-glycerol), PG). BMP is an important player in cargo sorting and degradation, regulation of cellular cholesterol levels and intercellular communication. At neutral pH, hydrolyzes the sn-1 fatty acyl group of the lysophosphatidylcholines. This is Lysosomal phospholipase A and acyltransferase from Homo sapiens (Human).